The following is a 180-amino-acid chain: ATP-dependent protease subunit HslV (180 aa).

The active site involves Thr-8. Na(+) is bound by residues Ser-165, Cys-168, and Thr-171.

This sequence belongs to the peptidase T1B family. HslV subfamily. As to quaternary structure, a double ring-shaped homohexamer of HslV is capped on each side by a ring-shaped HslU homohexamer. The assembly of the HslU/HslV complex is dependent on binding of ATP.

It localises to the cytoplasm. It carries out the reaction ATP-dependent cleavage of peptide bonds with broad specificity.. With respect to regulation, allosterically activated by HslU binding. Functionally, protease subunit of a proteasome-like degradation complex believed to be a general protein degrading machinery. This is ATP-dependent protease subunit HslV from Staphylococcus saprophyticus subsp. saprophyticus (strain ATCC 15305 / DSM 20229 / NCIMB 8711 / NCTC 7292 / S-41).